A 211-amino-acid polypeptide reads, in one-letter code: Probable nicotinate-nucleotide adenylyltransferase (211 aa).

Belongs to the NadD family.

The enzyme catalyses nicotinate beta-D-ribonucleotide + ATP + H(+) = deamido-NAD(+) + diphosphate. It participates in cofactor biosynthesis; NAD(+) biosynthesis; deamido-NAD(+) from nicotinate D-ribonucleotide: step 1/1. In terms of biological role, catalyzes the reversible adenylation of nicotinate mononucleotide (NaMN) to nicotinic acid adenine dinucleotide (NaAD). The polypeptide is Probable nicotinate-nucleotide adenylyltransferase (Shewanella frigidimarina (strain NCIMB 400)).